Consider the following 66-residue polypeptide: Large ribosomal subunit protein uL29 (66 aa).

This sequence belongs to the universal ribosomal protein uL29 family.

The polypeptide is Large ribosomal subunit protein uL29 (Bartonella tribocorum (strain CIP 105476 / IBS 506)).